We begin with the raw amino-acid sequence, 293 residues long: Movement protein BC1 (293 aa).

This sequence belongs to the begomovirus movement protein BC1 family. Binds to dimeric supercoiled plasmid DNA. In terms of processing, phosphorylated.

The protein resides in the host cell membrane. It localises to the host microsome membrane. It is found in the host endoplasmic reticulum membrane. Transports viral genome to neighboring plant cells directly through plasmosdesmata, without any budding. The movement protein allows efficient cell to cell propagation, by bypassing the host cell wall barrier. Begomovirus genome is shuttled out of nucleus by Nuclear shuttle protein (NSP) and the movement protein transports the DNA-NSP complex to cell plasmodesmata and facilitates further movement across the cell wall. The chain is Movement protein BC1 from Macroptilium lathyroides (Lima bean).